The following is a 172-amino-acid chain: Large ribosomal subunit protein uL10 (172 aa).

The protein belongs to the universal ribosomal protein uL10 family. Part of the ribosomal stalk of the 50S ribosomal subunit. The N-terminus interacts with L11 and the large rRNA to form the base of the stalk. The C-terminus forms an elongated spine to which 3 L12 dimers bind in a sequential fashion forming a heptameric L10(L12)2(L12)2(L12)2 complex.

Functionally, forms part of the ribosomal stalk, playing a central role in the interaction of the ribosome with GTP-bound translation factors. The chain is Large ribosomal subunit protein uL10 from Agrobacterium fabrum (strain C58 / ATCC 33970) (Agrobacterium tumefaciens (strain C58)).